Consider the following 74-residue polypeptide: Protein SlyX homolog (74 aa).

It belongs to the SlyX family.

This is Protein SlyX homolog from Aliivibrio fischeri (strain ATCC 700601 / ES114) (Vibrio fischeri).